The following is a 591-amino-acid chain: N-acetylgalactosaminyltransferase 7 (591 aa).

At 1-11 (MRVSTIRSGRI) the chain is on the cytoplasmic side. The chain crosses the membrane as a helical; Signal-anchor for type II membrane protein span at residues 12-29 (CRLALCLLVLLPLLYLLA). Asn-30 carries N-linked (GlcNAc...) asparagine glycosylation. Topologically, residues 30–591 (NWSDHHKRVQ…WWFKEIRPRW (562 aa)) are lumenal. Residues 68-100 (DGLGNFEPKDVKPRSGPGENGEAHSLSPDKKHM) form a disordered region. Intrachain disulfides connect Cys-132–Cys-367, Cys-358–Cys-441, Cys-479–Cys-496, Cys-519–Cys-532, and Cys-558–Cys-573. Residues 141–251 (LPRTSVIIVF…TNWLPPLLAP (111 aa)) are catalytic subdomain A. Substrate contacts are provided by Asp-182 and Arg-212. Residues Asp-235 and His-237 each coordinate Mn(2+). A catalytic subdomain B region spans residues 313 to 375 (PYRSPTHAGG…PCSRVGHVYR (63 aa)). Trp-344 provides a ligand contact to substrate. Mn(2+) is bound at residue His-372. The substrate site is built by Arg-375 and Tyr-380. The Ricin B-type lectin domain occupies 466-585 (LHWGELRSVA…NDSYQQWWFK (120 aa)). Asn-576 is a glycosylation site (N-linked (GlcNAc...) asparagine).

The protein belongs to the glycosyltransferase 2 family. GalNAc-T subfamily. The cofactor is Mn(2+). Expressed in developing oocytes and egg chambers. During embryonic stages 9-11, expressed in the primordium of the foregut, midgut and hindgut. Expressed in the salivary glands from embryonic stage 12 onwards. During embryonic stages 12-13, expressed in the posterior midgut and hindgut. During embryonic stages 14-15, expression continues in the hindgut. During embryonic stages 16-17, expressed in the antennomaxillary complex. In third instar larvae, ubiquitously expressed in wing, with increased expression in the notum and ventral wing pouch, eye-antennal, leg and haltere imaginal disks.

The protein localises to the golgi apparatus membrane. It catalyses the reaction L-seryl-[protein] + UDP-N-acetyl-alpha-D-galactosamine = a 3-O-[N-acetyl-alpha-D-galactosaminyl]-L-seryl-[protein] + UDP + H(+). The enzyme catalyses L-threonyl-[protein] + UDP-N-acetyl-alpha-D-galactosamine = a 3-O-[N-acetyl-alpha-D-galactosaminyl]-L-threonyl-[protein] + UDP + H(+). The protein operates within protein modification; protein glycosylation. Glycopeptide transferase involved in O-linked oligosaccharide biosynthesis, which catalyzes the transfer of an N-acetyl-D-galactosamine residue to an already glycosylated peptide. In contrast to other proteins of the family, it does not act as a peptide transferase that transfers GalNAc onto serine or threonine residue on the protein receptor, but instead requires the prior addition of a GalNAc on a peptide before adding additional GalNAc moieties. Some peptide transferase activity is however not excluded, considering that its appropriate peptide substrate may remain unidentified. Prefers the monoglycosylated Muc5AC-3 as substrate. Might have a role in protein O-glycosylation in the Golgi and thereby in establishing and/or maintaining a proper secretory apparatus structure. This chain is N-acetylgalactosaminyltransferase 7, found in Drosophila melanogaster (Fruit fly).